We begin with the raw amino-acid sequence, 145 residues long: Arginine repressor (145 aa).

Belongs to the ArgR family.

The protein resides in the cytoplasm. The protein operates within amino-acid biosynthesis; L-arginine biosynthesis [regulation]. In terms of biological role, regulates arginine biosynthesis genes. In Streptococcus pyogenes serotype M3 (strain ATCC BAA-595 / MGAS315), this protein is Arginine repressor.